The primary structure comprises 246 residues: Carboxymethylenebutenolidase homolog (246 aa).

Active-site residues include Cys-132, Asp-179, and His-212.

This sequence belongs to the dienelactone hydrolase family.

It localises to the cytoplasm. Its subcellular location is the cytosol. Functionally, cysteine hydrolase. This is Carboxymethylenebutenolidase homolog (cmbl) from Xenopus tropicalis (Western clawed frog).